Reading from the N-terminus, the 1294-residue chain is CLIP-associating protein 2 (1294 aa).

Residues 1–61 are disordered; that stretch reads MAMGDDKSFD…KVGGASKEGG (61 aa). Phosphoserine is present on residues S8 and S14. Positions 47–61 are enriched in gly residues; the sequence is SAGGPKVGGASKEGG. The segment at 60-311 is TOG 1; that stretch reads GGAGAVDEDD…KSLQTYLKSS (252 aa). HEAT repeat units lie at residues 173–208, 209–245, and 250–287; these read HGAEAIVPTLFNLVPNSAKVMATSGCAAIRFIIRHT, HVPRLIPLITSNCTSKSVPVRRRSFEFLDLLLQEWQT, and RHAAVLVETIKKGIHDADAEARVEARKTYMGLRNHFPG. Residues 314–368 form a disordered region; the sequence is VASLPQSDRSSSSSQESLNRPFSSKWSTANPSTVAGRVSAGSSKASSLPGSLQRS. Phosphoserine is present on residues S316, S327, and S330. The span at 316–334 shows a compositional bias: low complexity; that stretch reads SLPQSDRSSSSSQESLNRP. Polar residues-rich tracts occupy residues 335–346 and 353–367; these read FSSKWSTANPST and AGSSKASSLPGSLQR. Residues S360, S368, S370, and S407 each carry the phosphoserine modification. The disordered stretch occupies residues 409 to 467; the sequence is EDTSDKLDGTASEDGRVRAKLSAPLAGMGNAKADSRGRSRTKMVSQSQPGSRSGSPGRV. The segment covering 411 to 425 has biased composition (basic and acidic residues); it reads TSDKLDGTASEDGRV. Positions 444 to 580 are interaction with microtubules, MAPRE1 and MAPRE3; sequence RGRSRTKMVS…GPGYGISQSS (137 aa). Positions 453-467 are enriched in low complexity; it reads SQSQPGSRSGSPGRV. S455, S459, S463, S478, and S489 each carry phosphoserine. Residues 488 to 557 form a disordered region; that stretch reads ASAQKRSKIP…PLASRHHSRS (70 aa). The SXIP motif 1; mediates interaction with MAPRE1 and targeting to microtubule plus ends signature appears at 494–497; sequence SKIP. S507 carries the phosphoserine modification. Residues 517–520 carry the SXIP motif 2; mediates interaction with MAPRE1 and targeting to microtubule plus ends motif; sequence SRIP. Phosphoserine is present on residues S525, S529, S585, S587, S596, S621, and S627. Positions 617-645 are disordered; sequence YGMHSDDDANSDASSACSERSYSSRNGSI. A compositionally biased stretch (low complexity) spans 627–641; the sequence is SDASSACSERSYSSR. The tract at residues 649–881 is TOG 2; sequence MRQTEDVAEV…TKLLHNHLRN (233 aa). HEAT repeat units lie at residues 710–747 and 772–809; these read RVFSMFLETLVDFIQVHKDDLQDWLFVLLTQLLKKMGA and LQFNILMRFTVDQTQTPSLKVKVAILKYIETLAKQMDP. Position 787 is a phosphothreonine (T787). The interaction with RSN and localization to the Golgi and kinetochores stretch occupies residues 872 to 1294; it reads TKLLHNHLRN…DPTTDVSGQS (423 aa). Disordered regions lie at residues 878 to 928 and 952 to 995; these read HLRN…FDYD and SFRS…DSSQ. 2 stretches are compositionally biased toward polar residues: residues 880–892 and 901–922; these read RNTGNGTQSSMGS and SPANWSSPLTSPTNTSQNTLSP. Position 892 is a phosphoserine (S892). 4 positions are modified to phosphoserine: S952, S955, S1013, and S1029. Positions 955-972 are enriched in basic and acidic residues; that stretch reads SQEDMNEPLKRDSKKDDG. The tract at residues 1017–1294 is required for cortical localization; it reads RDYNPYNYSD…DPTTDVSGQS (278 aa). HEAT repeat units lie at residues 1054–1091, 1098–1135, and 1216–1253; these read LDHSDLVAELLKELSNHNERVEERKIALYELMKLTQEE, EHFKTILLLLLETLGDKEPTIRALALKVLREILRHQPA, and LLLPEIMPGLIQGYDNSESSVRKACVFCLVAVHAVIGD.

It belongs to the CLASP family. As to quaternary structure, interacts with microtubules. Interacts with MAPRE1; probably required for targeting to the growing microtubule plus ends. Interacts with CLIP2, ERC1, MAPRE3, PHLDB2 and RSN. The interaction with ERC1 may be mediated by PHLDB2. Interacts with GCC2; recruits CLASP2 to Golgi membranes. Interacts with MACF1. Interacts with mtcl2 and MTCL1. In terms of processing, phosphorylated by GSK3B. Phosphorylation reduces MAPRE1 binding. Phosphorylation by GSK3B may negatively regulate binding to microtubule lattices in lamella. In terms of tissue distribution, brain-specific.

It localises to the cytoplasm. Its subcellular location is the cytoskeleton. The protein resides in the microtubule organizing center. It is found in the centrosome. The protein localises to the chromosome. It localises to the centromere. Its subcellular location is the kinetochore. The protein resides in the spindle. It is found in the golgi apparatus. The protein localises to the trans-Golgi network. It localises to the cell membrane. Its subcellular location is the cell projection. The protein resides in the ruffle membrane. It is found in the cell cortex. Functionally, microtubule plus-end tracking protein that promotes the stabilization of dynamic microtubules. Involved in the nucleation of noncentrosomal microtubules originating from the trans-Golgi network (TGN). Required for the polarization of the cytoplasmic microtubule arrays in migrating cells towards the leading edge of the cell. May act at the cell cortex to enhance the frequency of rescue of depolymerizing microtubules by attaching their plus-ends to cortical platforms composed of ERC1 and PHLDB2. This cortical microtubule stabilizing activity is regulated at least in part by phosphatidylinositol 3-kinase signaling. Also performs a similar stabilizing function at the kinetochore which is essential for the bipolar alignment of chromosomes on the mitotic spindle. Acts as a mediator of ERBB2-dependent stabilization of microtubules at the cell cortex. This is CLIP-associating protein 2 (CLASP2) from Homo sapiens (Human).